The primary structure comprises 1259 residues: MSQTNGNMEHSKETPQSQEVEQLTNGNHPEEQQEEEENNGGLFQISVKLPHEPHKIQVMVSSQEQVQDVRQSIVELPGTFQYTCFHLEFNGKRINDFVELSEVEDLKADSEIVLVEDPYTEKEARMHTVRIRDLVGAAGDRVDNLQGLDAGLSLHDSVTAEAAASEEKEHSLSKYDITASPSLKTILPRDEAPLPKTVKSISLSAWNPPPYHLRQKGHLLYLQVATNEGEQFQVTSHVSGFYVNKCSNAKFDPSPRTIPKKVSAHSLLTLISKISPSFNTAFEALQESNNQKDLLTTFPFQNAIPNSPWLVPPPSSNVNVHQADITRSQESYLISGVDNAETLRDWNEEFQTTRELPRETVQDRVFRERLTSKLFADYNEAAARGAVLVARGEVAPLNPTEDRDAQIFVYNNIFYSFGADGVGTFASEGGDEAARVAVGKDVLGIKAVNQLDINGLFTPGTVVVDYLGKRIVGQSIVPGIFKQREPGEHQIDYGGVEGKDVVATHPDFVSVFEKMSKALRIKKHAVWDKDSKRHDLEGSVETKGLLGTDGRKYVLDLYRVTPLDVMWQEEPNSEEYPHRMSVLRLELVEAYWRSKMSQYVKAEVERRRAVKAEAEKEKPAESSESKEQDSEEKTEEKTEESSDQERVDISGFQLALNPDVCSGQVPQTDEEKQQWAEDEKEVRDACDFLRSKVMPELVQDLHDGDVGFPMDGQSLGQLLHKRGINIRYLGKLAQLSKEKGARLDALTTLLIQEMIARAFKHIANRFMRNVPAPFVASCVAHLLNCLLGADVNANPRAEIDASLREFYPEGDFTFETVTPETLRAEIEQQVALRYRFTLESEWFASLRHLQLLRDIAIKLGLQLGAREYAFTKDQLPPKVPVVNGANNAAQDEGKKKKKKGADKSPSRAIVEEKPAVSIVPDDIVNVVPLVKDASPRSSLAEEALEAGRISLMQNQKQLGQELILESLSLHEQIYGILHPEVAKLYHQLSMLYYQTDEKEAAVELARKAVIVTERTLGVDSADTILAYLNLSLFEHASGNTKTALVYIKHAMDLWKIIYGPNHPDSITTMNNAAVMLQHLKQYADSRKWFEASLSVCESLFGKQSINTATILFQLAQALALDQDSKGAVGKMRDAYNIFLSQLGPDDRNTKEAETWLEQLTQNAVSIAKHAKDIQARRLRRINMNPRVTTLGTKVQPQVGQTAPEASGAKNAANASLDSRSIDELLKFIEGGDTSSSRSKQKKRAAASNPKLRGSKKSSA.

A compositionally biased stretch (polar residues) spans 1 to 27; sequence MSQTNGNMEHSKETPQSQEVEQLTNGN. Positions 1–38 are disordered; sequence MSQTNGNMEHSKETPQSQEVEQLTNGNHPEEQQEEEEN. The Clu domain occupies 324 to 568; it reads DITRSQESYL…RVTPLDVMWQ (245 aa). Basic and acidic residues-rich tracts occupy residues 612 to 628 and 634 to 647; these read AEAEKEKPAESSESKEQ and TEEKTEESSDQERV. Disordered stretches follow at residues 612–647 and 881–908; these read AEAEKEKPAESSESKEQDSEEKTEEKTEESSDQERV and VVNGANNAAQDEGKKKKKKGADKSPSRA. TPR repeat units follow at residues 982 to 1015, 1024 to 1057, and 1066 to 1099; these read AKLYHQLSMLYYQTDEKEAAVELARKAVIVTERT, ILAYLNLSLFEHASGNTKTALVYIKHAMDLWKII, and ITTMNNAAVMLQHLKQYADSRKWFEASLSVCESL. Disordered stretches follow at residues 1192–1215 and 1229–1259; these read TKVQPQVGQTAPEASGAKNAANAS and EGGDTSSSRSKQKKRAAASNPKLRGSKKSSA.

The protein belongs to the CLU family. As to quaternary structure, may associate with the eukaryotic translation initiation factor 3 (eIF-3) complex.

Its subcellular location is the cytoplasm. MRNA-binding protein involved in proper cytoplasmic distribution of mitochondria. The polypeptide is Clustered mitochondria protein homolog (Aspergillus clavatus (strain ATCC 1007 / CBS 513.65 / DSM 816 / NCTC 3887 / NRRL 1 / QM 1276 / 107)).